Here is a 330-residue protein sequence, read N- to C-terminus: Probable transposase for insertion sequence element ISH11 (330 aa).

The protein belongs to the transposase 11 family.

Involved in the transposition of the insertion sequence ISH11. In Halobacterium salinarum (strain ATCC 29341 / DSM 671 / R1), this protein is Probable transposase for insertion sequence element ISH11.